The sequence spans 150 residues: uncharacterized protein (150 aa).

Positions 1–39 (MKQRFSQVATVIFFVMSIRSPRNLGFFFTLALFVVLVCS) are cleaved as a signal peptide.

This is an uncharacterized protein from Saccharomyces cerevisiae (strain ATCC 204508 / S288c) (Baker's yeast).